A 1013-amino-acid chain; its full sequence is EF-hand calcium-binding domain-containing protein 6 (1013 aa).

EF-hand domains follow at residues 20-55, 145-180, 251-286, 287-322, and 352-387; these read KNIK…FCLK, KSYE…FIYQ, DRSA…VAIK, LSDS…NCRM, and RNLQ…FCPF. The interval 441-460 is disordered; the sequence is QKDEQQQPDLSERTKPTEDK. EF-hand domains follow at residues 482–517, 589–624, 695–730, 731–766, 812–847, and 917–952; these read QQDP…TGMP, ESFR…LLLN, NRWS…FDIP, LTPR…NYSP, DLHQ…CGCS, and SSQL…FCYK. Ca(2+) contacts are provided by Asp-602, Asp-604, Asp-606, and Asp-613. A Phosphothreonine modification is found at Thr-732.

As to quaternary structure, microtubule inner protein component of sperm flagellar doublet microtubules. Binds PARK7. Part of a ternary complex containing PARK7, EFCAB6/DJBP and AR.

It localises to the nucleus. It is found in the cytoplasm. The protein resides in the cytoskeleton. The protein localises to the flagellum axoneme. Functionally, negatively regulates the androgen receptor by recruiting histone deacetylase complex, and protein DJ-1 antagonizes this inhibition by abrogation of this complex. Microtubule inner protein (MIP) part of the dynein-decorated doublet microtubules (DMTs) in cilia axoneme, which is required for motile cilia beating. The polypeptide is EF-hand calcium-binding domain-containing protein 6 (EFCAB6) (Pongo abelii (Sumatran orangutan)).